A 555-amino-acid polypeptide reads, in one-letter code: Gamma-aminobutyric acid receptor subunit alpha-4 (555 aa).

An N-terminal signal peptide occupies residues 1-35 (MVSAKKVPAIAMSFGVSFALLHFLCLAACLNESPG). The Extracellular portion of the chain corresponds to 36–259 (QNQKEEKLCP…FHLRRKMGYF (224 aa)). An N-linked (GlcNAc...) asparagine glycan is attached at Asn-47. Arg-100 provides a ligand contact to 4-aminobutanoate. Asn-144 and Asn-157 each carry an N-linked (GlcNAc...) asparagine glycan. Thr-163 lines the 4-aminobutanoate pocket. Residues Cys-172 and Cys-186 are joined by a disulfide bond. Residues 260 to 280 (MIQTYIPCIMTVILSQVSFWI) form a helical membrane-spanning segment. Over 281 to 284 (NKES) the chain is Cytoplasmic. The helical transmembrane segment at 285–305 (VPARTVFGITTVLTMTTLSIS) threads the bilayer. The Extracellular segment spans residues 306 to 318 (ARHSLPKVSYATA). The helical transmembrane segment at 319–341 (MDWFIAVCFAFVFSALIEFAAVN) threads the bilayer. At 342-518 (YFTNVQMEKA…PPPSGSGTSK (177 aa)) the chain is on the cytoplasmic side. 2 disordered regions span residues 354–435 (KTSK…SPNP) and 495–516 (GTSGKLSATTTPSAPPPSGSGT). The segment covering 410–421 (SSKSSTVVQGSS) has biased composition (low complexity). Polar residues predominate over residues 422 to 435 (EATPQSYLASSPNP). The chain crosses the membrane as a helical span at residues 519–545 (IDKYARILFPVTFGAFNMVYWVVYLSK). At 546 to 555 (DTMEKSESLM) the chain is on the extracellular side.

Belongs to the ligand-gated ion channel (TC 1.A.9) family. Gamma-aminobutyric acid receptor (TC 1.A.9.5) subfamily. GABRA4 sub-subfamily. Heteropentamer, formed by a combination of alpha (GABRA1-6), beta (GABRB1-3), gamma (GABRG1-3), delta (GABRD), epsilon (GABRE), rho (GABRR1-3), pi (GABRP) and theta (GABRQ) chains, each subunit exhibiting distinct physiological and pharmacological properties. Expressed in the brain.

It localises to the cell membrane. Its subcellular location is the postsynaptic cell membrane. It carries out the reaction chloride(in) = chloride(out). Its activity is regulated as follows. Potentiated by histamine. Functionally, alpha subunit of the heteropentameric ligand-gated chloride channel gated by gamma-aminobutyric acid (GABA), a major inhibitory neurotransmitter in the brain. GABA-gated chloride channels, also named GABA(A) receptors (GABAAR), consist of five subunits arranged around a central pore and contain GABA active binding site(s) located at the alpha and beta subunit interface(s). When activated by GABA, GABAARs selectively allow the flow of chloride anions across the cell membrane down their electrochemical gradient. GABAARs containing alpha-4 are predominantly extrasynaptic, contributing to tonic inhibition in dentate granule cells and thalamic relay neurons. Extrasynaptic alpha-4-containing GABAARs control levels of excitability and network activity. GABAARs containing alpha-4 are often found with the delta or gamma-2 subunits, in combination with beta subunits. GABAAR containing alpha-4-beta-3-delta subunits can simultaneously bind GABA and histamine where histamine binds at the interface of two neighboring beta subunits, which may be involved in the regulation of sleep and wakefulness. This Bos taurus (Bovine) protein is Gamma-aminobutyric acid receptor subunit alpha-4 (GABRA4).